A 537-amino-acid chain; its full sequence is Phenylalanine--tRNA ligase beta subunit (537 aa).

Positions 268-343 constitute a B5 domain; it reads FNFRPYRLNL…KSYGIENVRE (76 aa). Residues Asp321, Asp327, Glu330, and Asp331 each contribute to the Mg(2+) site.

Belongs to the phenylalanyl-tRNA synthetase beta subunit family. Type 2 subfamily. Tetramer of two alpha and two beta subunits. It depends on Mg(2+) as a cofactor.

The protein resides in the cytoplasm. The enzyme catalyses tRNA(Phe) + L-phenylalanine + ATP = L-phenylalanyl-tRNA(Phe) + AMP + diphosphate + H(+). This chain is Phenylalanine--tRNA ligase beta subunit, found in Thermoplasma volcanium (strain ATCC 51530 / DSM 4299 / JCM 9571 / NBRC 15438 / GSS1).